Reading from the N-terminus, the 579-residue chain is Nuclear receptor coactivator 5 (579 aa).

N-acetylmethionine is present on M1. Residues 1 to 77 form a disordered region; that stretch reads MNTAPSRPSP…DIRDHRDSRS (77 aa). A transcription repression region spans residues 1–158; that stretch reads MNTAPSRPSP…RDSFDGRGPP (158 aa). Residue T3 is modified to Phosphothreonine. S9, S21, S29, S34, S96, S116, S126, S143, and S151 each carry phosphoserine. Basic and acidic residues predominate over residues 11 to 77; sequence TRRDPYSFGD…DIRDHRDSRS (67 aa). The tract at residues 148–172 is disordered; the sequence is YRDSFDGRGPPGPESQSRAKERLKR. At T274 the chain carries Phosphothreonine. Positions 345–349 match the LXXLL motif motif; sequence LINLL. Phosphoserine occurs at positions 378 and 381. 2 disordered regions span residues 378–428 and 446–529; these read SADS…PTSQ and ANSS…RPVS. 2 stretches are compositionally biased toward low complexity: residues 395-420 and 446-460; these read SGSSLKSQPSSQPLQSGQVLPSATPT and ANSSSASPSVATGSS. Residues 458–579 form a transcription activation region; it reads GSSQNQNFST…APMGSYQRHY (122 aa). The span at 461 to 485 shows a compositional bias: polar residues; it reads QNQNFSTAANSQPQQRPQASGNQPP.

In terms of assembly, binds HTATIP2/TIP30. Interacts with YLPM1. Forms a complex with ILF2, ILF3, YLPM1, KHDRBS1, RBMX and PPP1CA.

The protein resides in the nucleus. Its function is as follows. Nuclear receptor coregulator that can have both coactivator and corepressor functions. Interacts with nuclear receptors for steroids (ESR1 and ESR2) independently of the steroid binding domain (AF-2) of the ESR receptors, and with the orphan nuclear receptor NR1D2. Involved in the coactivation of nuclear steroid receptors (ER) as well as the corepression of MYC in response to 17-beta-estradiol (E2). This Mus musculus (Mouse) protein is Nuclear receptor coactivator 5 (Ncoa5).